Consider the following 261-residue polypeptide: Small ribosomal subunit protein mS23 (261 aa).

The disordered stretch occupies residues 233 to 261; the sequence is RASSPSASWTNETEEEQKPIDQDVEEIQL.

Belongs to the mitochondrion-specific ribosomal protein mS23 family. As to quaternary structure, component of the mitochondrial small ribosomal subunit.

It is found in the mitochondrion. The polypeptide is Small ribosomal subunit protein mS23 (RSM25) (Kluyveromyces lactis (strain ATCC 8585 / CBS 2359 / DSM 70799 / NBRC 1267 / NRRL Y-1140 / WM37) (Yeast)).